A 150-amino-acid chain; its full sequence is Large ribosomal subunit protein bL9 (150 aa).

Belongs to the bacterial ribosomal protein bL9 family.

Functionally, binds to the 23S rRNA. This chain is Large ribosomal subunit protein bL9, found in Streptococcus pyogenes serotype M3 (strain SSI-1).